The primary structure comprises 93 residues: Transcription factor RADIALIS (93 aa).

The 56-residue stretch at 6–61 (GSGRPWSAKENKAFERALAVYDKDTPDRWANVARAVEGRTPEEVKKHYEILVEDIK) folds into the SANT domain.

As to expression, specifically expressed in the dorsal region of developing flowers.

Its subcellular location is the nucleus. In terms of biological role, involved in the dorsovental asymmetry of flowers. Promotes dorsal identity. The polypeptide is Transcription factor RADIALIS (RAD) (Antirrhinum majus (Garden snapdragon)).